The following is an 808-amino-acid chain: Probable phosphoketolase 1 (808 aa).

This sequence belongs to the XFP family. Requires thiamine diphosphate as cofactor.

The polypeptide is Probable phosphoketolase 1 (Nostoc sp. (strain PCC 7120 / SAG 25.82 / UTEX 2576)).